Here is a 408-residue protein sequence, read N- to C-terminus: Glucose-1-phosphate adenylyltransferase (408 aa).

Residues tyrosine 100, glycine 165, 180 to 181 (EK), and serine 198 contribute to the alpha-D-glucose 1-phosphate site.

The protein belongs to the bacterial/plant glucose-1-phosphate adenylyltransferase family. As to quaternary structure, homotetramer.

The enzyme catalyses alpha-D-glucose 1-phosphate + ATP + H(+) = ADP-alpha-D-glucose + diphosphate. It participates in glycan biosynthesis; glycogen biosynthesis. Its function is as follows. Involved in the biosynthesis of ADP-glucose, a building block required for the elongation reactions to produce glycogen. Catalyzes the reaction between ATP and alpha-D-glucose 1-phosphate (G1P) to produce pyrophosphate and ADP-Glc. The polypeptide is Glucose-1-phosphate adenylyltransferase (Cutibacterium acnes (strain DSM 16379 / KPA171202) (Propionibacterium acnes)).